A 382-amino-acid polypeptide reads, in one-letter code: Bestrophin-6 (382 aa).

The next 4 helical transmembrane spans lie at 29–49 (WKLIHRELFMWLVLYYTVLAI), 68–88 (FINFEPSILTFMLSFFVTTIV), 231–251 (LAYPQVIFFAVRLYFVICAFA), and 265–285 (VIHYYFPIVTVFQFICLMGWL).

It belongs to the anion channel-forming bestrophin (TC 1.A.46) family. Calcium-sensitive chloride channel subfamily.

It localises to the membrane. This Caenorhabditis elegans protein is Bestrophin-6 (best-6).